The following is a 53-amino-acid chain: Metallocarboxypeptidase inhibitor (53 aa).

Cystine bridges form between cysteine 9-cysteine 23, cysteine 15-cysteine 51, and cysteine 27-cysteine 38. Residue alanine 53 coordinates Zn(2+).

In terms of assembly, monomer. Interacts (via C-terminus) with human CPA4.

Its function is as follows. Metallocarboxypeptidase inhibitor. Has an inhibitory effect on bovine CPA1 and CPB2, human CPA1, CPA2, CPA4, CPB1 and CPB2, and porcine CPB1. Does not inhibit D.melanogaster svr (carboxypeptidase D). Shows no activity against serine proteases subtilisin or bovine trypsin, cysteine protease papain, and aspartyl protease porcine pepsin. In Nerita versicolor (Four-tooth nerite), this protein is Metallocarboxypeptidase inhibitor.